The sequence spans 949 residues: Protocadherin alpha-11 (949 aa).

The first 29 residues, 1–29, serve as a signal peptide directing secretion; sequence MFGFQRRGLGTPRLQLWLLLLEFWEVGSG. Cadherin domains lie at 30–133, 157–242, 243–349, 350–454, 455–564, and 580–677; these read QLHY…PPVF, ASDA…DPEF, DKSE…SPEV, AVTS…APAF, AQPE…APAL, and VPRS…APKA. Topologically, residues 30 to 696 are extracellular; sequence QLHYSVSEEA…SPEAALVDVN (667 aa). N-linked (GlcNAc...) asparagine glycosylation is found at asparagine 265 and asparagine 304. An N-linked (GlcNAc...) asparagine glycan is attached at asparagine 547. The helical transmembrane segment at 697–717 threads the bilayer; it reads VYLIIAICVVSSLLVLTLLLY. At 718-949 the chain is on the cytoplasmic side; the sequence is TALWWSATPT…GNSTTDNSDQ (232 aa). PXXP repeat units follow at residues 733-736 and 773-776; these read PGKP and PSLP. Residues 733-893 form a 6 X 4 AA repeats of P-X-X-P region; the sequence is PGKPTLVCSR…PDKFIIPGSP (161 aa). Disordered stretches follow at residues 753-807 and 826-949; these read RRQR…DWRY and ILRA…NSDQ. Over residues 780-789 the composition is skewed to basic and acidic residues; that stretch reads NKEEEGERQE. PXXP repeat units lie at residues 795-798, 831-834, 872-875, and 890-893; these read PGQP, PGGP, PGNP, and PGSP. The segment covering 908–922 has biased composition (basic and acidic residues); it reads DKSDFITFGKKEETK.

The protein localises to the cell membrane. In terms of biological role, potential calcium-dependent cell-adhesion protein. May be involved in the establishment and maintenance of specific neuronal connections in the brain. The chain is Protocadherin alpha-11 (PCDHA11) from Homo sapiens (Human).